The chain runs to 185 residues: Ribosome-recycling factor (185 aa).

This sequence belongs to the RRF family.

It is found in the cytoplasm. Functionally, responsible for the release of ribosomes from messenger RNA at the termination of protein biosynthesis. May increase the efficiency of translation by recycling ribosomes from one round of translation to another. This Thermosipho africanus (strain TCF52B) protein is Ribosome-recycling factor.